Consider the following 445-residue polypeptide: Xylose isomerase (445 aa).

Catalysis depends on residues His107 and Asp110. Mg(2+) is bound by residues Glu238, Glu274, His277, Asp302, Asp313, Asp315, and Asp345.

The protein belongs to the xylose isomerase family. Homotetramer. Mg(2+) serves as cofactor.

Its subcellular location is the cytoplasm. It carries out the reaction alpha-D-xylose = alpha-D-xylulofuranose. This is Xylose isomerase (xylA) from Bacillus subtilis (strain 168).